The following is a 70-amino-acid chain: DNA gyrase inhibitor YacG (70 aa).

Positions 7, 10, 26, and 30 each coordinate Zn(2+).

This sequence belongs to the DNA gyrase inhibitor YacG family. In terms of assembly, interacts with GyrB. Requires Zn(2+) as cofactor.

Functionally, inhibits all the catalytic activities of DNA gyrase by preventing its interaction with DNA. Acts by binding directly to the C-terminal domain of GyrB, which probably disrupts DNA binding by the gyrase. The protein is DNA gyrase inhibitor YacG of Shewanella sediminis (strain HAW-EB3).